A 267-amino-acid polypeptide reads, in one-letter code: Malonyl-[acyl-carrier protein] O-methyltransferase (267 aa).

The protein belongs to the methyltransferase superfamily.

It carries out the reaction malonyl-[ACP] + S-adenosyl-L-methionine = malonyl-[ACP] methyl ester + S-adenosyl-L-homocysteine. Its pathway is cofactor biosynthesis; biotin biosynthesis. Converts the free carboxyl group of a malonyl-thioester to its methyl ester by transfer of a methyl group from S-adenosyl-L-methionine (SAM). It allows to synthesize pimeloyl-ACP via the fatty acid synthetic pathway. This Yersinia pestis protein is Malonyl-[acyl-carrier protein] O-methyltransferase.